The chain runs to 596 residues: A-type ATP synthase subunit A (596 aa).

An ATP-binding site is contributed by 241 to 248; that stretch reads GPFGSGKT.

This sequence belongs to the ATPase alpha/beta chains family. In terms of assembly, has multiple subunits with at least A(3), B(3), C, D, E, F, H, I and proteolipid K(x).

It localises to the cell membrane. It catalyses the reaction ATP + H2O + 4 H(+)(in) = ADP + phosphate + 5 H(+)(out). Its function is as follows. Component of the A-type ATP synthase that produces ATP from ADP in the presence of a proton gradient across the membrane. The A chain is the catalytic subunit. The polypeptide is A-type ATP synthase subunit A (Ignicoccus hospitalis (strain KIN4/I / DSM 18386 / JCM 14125)).